Consider the following 396-residue polypeptide: Methionine import ATP-binding protein MetN 2 (396 aa).

The ABC transporter domain occupies 41 to 280; the sequence is VSFELVGKVF…PRHGATRALL (240 aa). Position 77–84 (77–84) interacts with ATP; it reads GRSGAGKS.

It belongs to the ABC transporter superfamily. Methionine importer (TC 3.A.1.24) family. As to quaternary structure, the complex is composed of two ATP-binding proteins (MetN), two transmembrane proteins (MetI) and a solute-binding protein (MetQ).

It is found in the cell inner membrane. It carries out the reaction L-methionine(out) + ATP + H2O = L-methionine(in) + ADP + phosphate + H(+). It catalyses the reaction D-methionine(out) + ATP + H2O = D-methionine(in) + ADP + phosphate + H(+). Its function is as follows. Part of the ABC transporter complex MetNIQ involved in methionine import. Responsible for energy coupling to the transport system. In Burkholderia pseudomallei (strain 1710b), this protein is Methionine import ATP-binding protein MetN 2.